Reading from the N-terminus, the 200-residue chain is ATP synthase subunit s, mitochondrial (200 aa).

The transit peptide at 1–25 directs the protein to the mitochondrion; that stretch reads MMPFGKISQQLCGVKKLPWSCDSRY. The tract at residues 1–61 is N-terminal domain; sequence MMPFGKISQQ…SEWLLRCGAM (61 aa). Mg(2+) is bound at residue Gly59. 4 LRR repeats span residues 62–87, 88–116, 117–141, and 142–173; these read VRYH…KYKI, QAID…KIRL, CKCH…KTIL, and EMEI…LSDL. Thr93 provides a ligand contact to Mg(2+).

Belongs to the ATP synthase subunit s family. Homotetramer. Associates with ATP synthase.

The protein resides in the mitochondrion. It localises to the mitochondrion inner membrane. Functionally, involved in regulation of mitochondrial membrane ATP synthase. Necessary for H(+) conduction of ATP synthase. Facilitates energy-driven catalysis of ATP synthesis by blocking a proton leak through an alternative proton exit pathway. The sequence is that of ATP synthase subunit s, mitochondrial from Homo sapiens (Human).